Consider the following 312-residue polypeptide: Calcium-independent mitochondrial carrier protein SCaMC-3L (312 aa).

Solcar repeat units lie at residues 27 to 113, 121 to 206, and 217 to 304; these read GTLW…SKNF, QLFQ…LQCL, and PSGL…MKKT. 6 helical membrane-spanning segments follow: residues 33-50, 88-107, 131-144, 182-200, 219-243, and 279-298; these read LLSG…TAPL, GNGI…FSVC, SLAV…INPM, YLPN…LAVY, GLVS…LTLV, and GMTP…YLVY.

It belongs to the mitochondrial carrier (TC 2.A.29) family. In terms of tissue distribution, mainly expressed in testis and at lesser levels in brain.

The protein resides in the mitochondrion inner membrane. The enzyme catalyses Mg(2+)(out) + phosphate(in) + ATP(out) = Mg(2+)(in) + phosphate(out) + ATP(in). It catalyses the reaction ADP(out) + phosphate(in) + H(+)(out) = ADP(in) + phosphate(out) + H(+)(in). Calcium-independent ATP-Mg/Pi exchanger that catalyzes the electroneutral exchange of Mg-ATP or free ADP against an hydrogenphosphate and participates in the net transport of adenine nucleotides across the mitochondria inner membrane. The polypeptide is Calcium-independent mitochondrial carrier protein SCaMC-3L (Mus musculus (Mouse)).